Consider the following 126-residue polypeptide: Holo-[acyl-carrier-protein] synthase (126 aa).

Residues aspartate 9 and glutamate 58 each coordinate Mg(2+).

Belongs to the P-Pant transferase superfamily. AcpS family. Mg(2+) serves as cofactor.

The protein resides in the cytoplasm. It carries out the reaction apo-[ACP] + CoA = holo-[ACP] + adenosine 3',5'-bisphosphate + H(+). Functionally, transfers the 4'-phosphopantetheine moiety from coenzyme A to a Ser of acyl-carrier-protein. In Escherichia coli O127:H6 (strain E2348/69 / EPEC), this protein is Holo-[acyl-carrier-protein] synthase.